The following is a 249-amino-acid chain: Flagellar brake protein YcgR (249 aa).

A PilZ domain is found at glutamine 117–serine 236.

The protein belongs to the YcgR family. As to quaternary structure, monomer. Interacts with the flagellar basal bodies.

The protein resides in the bacterial flagellum basal body. Acts as a flagellar brake, regulating swimming and swarming in a bis-(3'-5') cyclic diguanylic acid (c-di-GMP)-dependent manner. Binds 1 c-di-GMP dimer per subunit. Increasing levels of c-di-GMP lead to decreased motility. The polypeptide is Flagellar brake protein YcgR (Erwinia tasmaniensis (strain DSM 17950 / CFBP 7177 / CIP 109463 / NCPPB 4357 / Et1/99)).